The sequence spans 88 residues: Phosphocarrier protein HPr (88 aa).

An HPr domain is found at 1–88 (MKKFQAVIKD…KACLEKNKVI (88 aa)). Catalysis depends on H15, which acts as the Pros-phosphohistidine intermediate. The residue at position 47 (S47) is a Phosphoserine; by HPrK/P.

Belongs to the HPr family.

It is found in the cytoplasm. Phosphorylation on Ser-47 inhibits the phosphoryl transfer from enzyme I to HPr. Its function is as follows. General (non sugar-specific) component of the phosphoenolpyruvate-dependent sugar phosphotransferase system (sugar PTS). This major carbohydrate active-transport system catalyzes the phosphorylation of incoming sugar substrates concomitantly with their translocation across the cell membrane. The phosphoryl group from phosphoenolpyruvate (PEP) is transferred to the phosphoryl carrier protein HPr by enzyme I. Phospho-HPr then transfers it to the PTS EIIA domain. In terms of biological role, P-Ser-HPr interacts with the catabolite control protein A (CcpA), forming a complex that binds to DNA at the catabolite response elements cre, operator sites preceding a large number of catabolite-regulated genes. Thus, P-Ser-HPr is a corepressor in carbon catabolite repression (CCR), a mechanism that allows bacteria to coordinate and optimize the utilization of available carbon sources. P-Ser-HPr also plays a role in inducer exclusion, in which it probably interacts with several non-PTS permeases and inhibits their transport activity. The sequence is that of Phosphocarrier protein HPr (ptsH) from Mycoplasma genitalium (strain ATCC 33530 / DSM 19775 / NCTC 10195 / G37) (Mycoplasmoides genitalium).